Consider the following 377-residue polypeptide: Mitochondrial pyrimidine nucleotide transporter RIM2 (377 aa).

3 Solcar repeats span residues 50–163 (VKPW…TKDM), 173–262 (ETPM…MKRL), and 286–375 (KEWC…VIRL). 6 helical membrane passes run 53–73 (WVHF…TCPF), 131–151 (GFRS…PARS), 179–199 (LMAA…IWLI), 238–258 (GLSA…LYEQ), 286–306 (KEWC…SIAT), and 347–368 (MYSG…MFGT).

Belongs to the mitochondrial carrier (TC 2.A.29) family.

The protein localises to the mitochondrion inner membrane. The catalysed reaction is 5-methyl-UTP(out) + UTP(in) = 5-methyl-UTP(in) + UTP(out). Mitochondrial transporter that imports/exports pyrimidine nucleotides into and from mitochondria. Selectively transports uridine, thymidine, and cytosine (deoxy)nucleoside di- and triphosphates by an antiport mechanism. Also transports, with lower efficiency, uridine, thymidine, and cytosine (deoxy)nucleoside monophosphates as well as guanosine (deoxy)nucleoside di- and triphosphate. May import (deoxy)nucleoside triphosphates in exchange for intramitochondrial (deoxy)nucleoside monophosphates, thus providing precursors necessary for de novo synthesis of mitochondrial DNA and RNA while exporting products of their catabolism. Mediates the transport of iron and other divalent metal ions like copper and zinc across the mitochondrial inner membrane in a pyrimidine nucleotide-dependent fashion. Catalyzes the co-import of pyrimidine nucleotides and divalent metal ions including ferrous iron. Participates in mitochondrial genome maintenance, regulation of mitochondrial membrane potential and mitochondrial respiration. The sequence is that of Mitochondrial pyrimidine nucleotide transporter RIM2 (RIM2) from Saccharomyces cerevisiae (strain ATCC 204508 / S288c) (Baker's yeast).